Reading from the N-terminus, the 109-residue chain is DNA-binding protein MJ0691 (109 aa).

The protein belongs to the PDCD5 family.

The sequence is that of DNA-binding protein MJ0691 from Methanocaldococcus jannaschii (strain ATCC 43067 / DSM 2661 / JAL-1 / JCM 10045 / NBRC 100440) (Methanococcus jannaschii).